We begin with the raw amino-acid sequence, 51 residues long: VVPPQHLCGAHLVDALYLVCGERGFFYTPKGIVEQCCHKPCNIFDLQNYCN.

3 disulfides stabilise this stretch: Cys8–Cys37, Cys20–Cys50, and Cys36–Cys41.

Belongs to the insulin family. As to quaternary structure, heterodimer of a B chain and an A chain linked by two disulfide bonds.

The protein localises to the secreted. Functionally, insulin decreases blood glucose concentration. It increases cell permeability to monosaccharides, amino acids and fatty acids. It accelerates glycolysis, the pentose phosphate cycle, and glycogen synthesis in liver. The polypeptide is Insulin (ins) (Platichthys flesus (European flounder)).